The following is a 56-amino-acid chain: TauPI-stichotoxin-Hcr2c (56 aa).

The 51-residue stretch at 4 to 54 (CLEPKVVGPCTAYFRRFYFDSETGKCTPFIYGGCEGNGNNFETLRACRAIC) folds into the BPTI/Kunitz inhibitor domain. 3 disulfide bridges follow: cysteine 4/cysteine 54, cysteine 13/cysteine 37, and cysteine 29/cysteine 50.

This sequence belongs to the venom Kunitz-type family. Sea anemone type 2 potassium channel toxin subfamily.

The protein resides in the secreted. Its subcellular location is the nematocyst. In terms of biological role, this protease inhibitor shows two different activities, it inhibits both the capsaicin receptor TRPV1 and serine proteases. It partially (max 50%) and reversibly inhibits mammalian TRPV1, a non-selective cation channel expressed by sensory neurons of the pain pathway). The second activity is a weak inhibition of trypsin and chymotrypsin activity (Ki=0.9 uM and Ki=4.5 uM, respectively). In vivo, shows analgesic effects on mammals. The polypeptide is TauPI-stichotoxin-Hcr2c (Radianthus crispa (Leathery sea anemone)).